Consider the following 429-residue polypeptide: Glutamate-1-semialdehyde 2,1-aminomutase 1 (429 aa).

The residue at position 268 (Lys-268) is an N6-(pyridoxal phosphate)lysine.

It belongs to the class-III pyridoxal-phosphate-dependent aminotransferase family. HemL subfamily. Homodimer. The cofactor is pyridoxal 5'-phosphate.

Its subcellular location is the cytoplasm. It catalyses the reaction (S)-4-amino-5-oxopentanoate = 5-aminolevulinate. It participates in porphyrin-containing compound metabolism; protoporphyrin-IX biosynthesis; 5-aminolevulinate from L-glutamyl-tRNA(Glu): step 2/2. The protein is Glutamate-1-semialdehyde 2,1-aminomutase 1 of Staphylococcus haemolyticus (strain JCSC1435).